Here is a 702-residue protein sequence, read N- to C-terminus: Antigen peptide transporter 2 (702 aa).

At 1-6 the chain is on the lumenal side; it reads MALSYL. A helical membrane pass occupies residues 7 to 27; that stretch reads RPWVSLLLADMALLGLLQGSL. At 28–56 the chain is on the cytoplasmic side; sequence GNLLPQGLPGLWIEGTLRLGVLWGLLKVG. The helical transmembrane segment at 57-77 threads the bilayer; the sequence is ELLGLVGTLLPLLCLATPLFF. The Lumenal segment spans residues 78-98; sequence SLRALVGGTASTSVVRVASAS. A helical transmembrane segment spans residues 99-119; that stretch reads WGWLLAGYGAVALSWAVWAVL. At 120-147 the chain is on the cytoplasmic side; the sequence is SPAGVQEKEPGQENRTLMKRLLKLSRPD. The helical transmembrane segment at 148–168 threads the bilayer; it reads LPFLIAAFFFLVVAVWGETLI. An ABC transmembrane type-1 domain is found at 151-434; sequence LIAAFFFLVV…LVYMYGDMLS (284 aa). Over 169–186 the chain is Lumenal; the sequence is PRYSGRVIDILGGDFDPD. The helical transmembrane segment at 187–207 threads the bilayer; it reads AFASAIFFMCLFSVGSSFSAG. Residues 208 to 265 are Cytoplasmic-facing; that stretch reads CRGGSFLFTMSRINLRIREQLFSSLLRQDLGFFQETKTGELNSRLSSDTSLMSRWLPF. Residues 266 to 286 form a helical membrane-spanning segment; the sequence is NANILLRSLVKVVGLYFFMLQ. Topologically, residues 287–292 are lumenal; it reads VSPRLT. Residues 293-313 form a helical membrane-spanning segment; the sequence is FLSLLDLPLTIAAEKVYNPRH. The part of the peptide-binding site stretch occupies residues 300–388; it reads PLTIAAEKVY…RRVMALGMQV (89 aa). At 314 to 373 the chain is on the cytoplasmic side; that stretch reads QAVLKEIQDAVAKAGQVVREAVGGLQTVRSFGAEEQEVSHYKEALERCRQLWWRRDLEKD. Residues 374-394 traverse the membrane as a helical segment; the sequence is VYLVIRRVMALGMQVLILNCG. The Lumenal segment spans residues 395-407; sequence VQQILAGEVTRGG. The chain crosses the membrane as a helical span at residues 408 to 428; the sequence is LLSFLLYQEEVGQYVRNLVYM. The interval 413-432 is part of the peptide-binding site; the sequence is LYQEEVGQYVRNLVYMYGDM. Topologically, residues 429-702 are cytoplasmic; the sequence is YGDMLSNVGA…AHLVQQRLEA (274 aa). The 235-residue stretch at 467 to 701 folds into the ABC transporter domain; it reads VEFQDVSFSY…YAHLVQQRLE (235 aa). 502–509 is an ATP binding site; the sequence is GPNGSGKS.

This sequence belongs to the ABC transporter superfamily. ABCB family. MHC peptide exporter (TC 3.A.1.209) subfamily. Heterodimer of TAP1 and TAP2 (TAP1-TAP2). A component of the peptide loading complex (PLC), interacts via TAPBP with MHCI heterodimer; this interaction mediates peptide-MHCI assembly. Mg(2+) is required as a cofactor.

The protein localises to the endoplasmic reticulum membrane. The catalysed reaction is a peptide antigen(in) + ATP + H2O = a peptide antigen(out) + ADP + phosphate + H(+). Its function is as follows. ABC transporter associated with antigen processing. In complex with TAP1 mediates unidirectional translocation of peptide antigens from cytosol to endoplasmic reticulum (ER) for loading onto MHC class I (MHCI) molecules. Uses the chemical energy of ATP to export peptides against the concentration gradient. During the transport cycle alternates between 'inward-facing' state with peptide binding site facing the cytosol to 'outward-facing' state with peptide binding site facing the ER lumen. Peptide antigen binding to ATP-loaded TAP1-TAP2 induces a switch to hydrolysis-competent 'outward-facing' conformation ready for peptide loading onto nascent MHCI molecules. Subsequently ATP hydrolysis resets the transporter to the 'inward facing' state for a new cycle. As a component of the peptide loading complex (PLC), acts as a molecular scaffold essential for peptide-MHCI assembly and antigen presentation. The polypeptide is Antigen peptide transporter 2 (Tap2) (Mus musculus (Mouse)).